The chain runs to 262 residues: Large ribosomal subunit protein bL9m (262 aa).

A mitochondrion-targeting transit peptide spans methionine 1 to serine 49.

The protein belongs to the bacterial ribosomal protein bL9 family. Component of the mitochondrial ribosome large subunit (39S) which comprises a 16S rRNA and about 50 distinct proteins.

It localises to the mitochondrion. The protein is Large ribosomal subunit protein bL9m (Mrpl9) of Rattus norvegicus (Rat).